Reading from the N-terminus, the 339-residue chain is Dihydroorotate dehydrogenase (quinone) (339 aa).

FMN-binding positions include 62–66 and Thr-86; that span reads AGMDK. Lys-66 is a substrate binding site. 111 to 115 is a binding site for substrate; it reads NRMGF. FMN is bound by residues Asn-139 and Asn-172. Asn-172 contributes to the substrate binding site. Ser-175 serves as the catalytic Nucleophile. Substrate is bound at residue Asn-177. FMN is bound by residues Lys-217 and Thr-245. Residue 246–247 participates in substrate binding; the sequence is NT. FMN contacts are provided by residues Gly-268, Gly-297, and 318–319; that span reads YS.

It belongs to the dihydroorotate dehydrogenase family. Type 2 subfamily. As to quaternary structure, monomer. Requires FMN as cofactor.

The protein localises to the cell membrane. The enzyme catalyses (S)-dihydroorotate + a quinone = orotate + a quinol. It participates in pyrimidine metabolism; UMP biosynthesis via de novo pathway; orotate from (S)-dihydroorotate (quinone route): step 1/1. In terms of biological role, catalyzes the conversion of dihydroorotate to orotate with quinone as electron acceptor. The polypeptide is Dihydroorotate dehydrogenase (quinone) (Shewanella baltica (strain OS155 / ATCC BAA-1091)).